A 278-amino-acid chain; its full sequence is Thiazole synthase (278 aa).

The active-site Schiff-base intermediate with DXP is the K107. Residues G168, 194 to 195 (AG), and 216 to 217 (AS) each bind 1-deoxy-D-xylulose 5-phosphate.

It belongs to the ThiG family. In terms of assembly, homotetramer. Forms heterodimers with either ThiH or ThiS.

The protein resides in the cytoplasm. The catalysed reaction is [ThiS sulfur-carrier protein]-C-terminal-Gly-aminoethanethioate + 2-iminoacetate + 1-deoxy-D-xylulose 5-phosphate = [ThiS sulfur-carrier protein]-C-terminal Gly-Gly + 2-[(2R,5Z)-2-carboxy-4-methylthiazol-5(2H)-ylidene]ethyl phosphate + 2 H2O + H(+). It participates in cofactor biosynthesis; thiamine diphosphate biosynthesis. Its function is as follows. Catalyzes the rearrangement of 1-deoxy-D-xylulose 5-phosphate (DXP) to produce the thiazole phosphate moiety of thiamine. Sulfur is provided by the thiocarboxylate moiety of the carrier protein ThiS. In vitro, sulfur can be provided by H(2)S. In Corynebacterium jeikeium (strain K411), this protein is Thiazole synthase.